The chain runs to 437 residues: Double-stranded RNA-binding protein 3 (437 aa).

Residues 1 to 22 form a disordered region; that stretch reads MKKKSAPTPLPPETANTSPAPI. DRBM domains are found at residues 35–104 and 120–187; these read VFKS…EIVK and LCKN…AIQG. Basic and acidic residues-rich tracts occupy residues 288-310 and 320-330; these read AKRV…ENQH and DEARVEQEPSR. Residues 288–331 are disordered; that stretch reads AKRVEDEPPRDIEMVQPDKENQHSDAALVQPDDEARVEQEPSRD.

Binds double-stranded RNA. This is Double-stranded RNA-binding protein 3 (DRB3) from Oryza sativa subsp. japonica (Rice).